The following is a 775-amino-acid chain: Zinc finger protein GLIS3 (775 aa).

Disordered stretches follow at residues 121 to 147 and 282 to 314; these read TESS…KKRA and PGST…AHLH. Positions 123–133 are enriched in low complexity; the sequence is SSHSPYPSPRH. Positions 134 to 147 are enriched in basic residues; it reads SSTRSHSARSKKRA. A compositionally biased stretch (pro residues) spans 289–307; that stretch reads PPAPPLPPLPPPPGPPPPY. The C2H2-type 1 zinc finger occupies 345-370; that stretch reads HCCRWIDCSALYDQQEELVRHIEKVH. The C2H2-type 2; atypical zinc finger occupies 379-406; the sequence is FTCFWAGCPRRYKPFNARYKLLIHMRVH. C2H2-type zinc fingers lie at residues 412 to 436, 442 to 466, and 472 to 496; these read NKCT…LRSH, YLCQ…QRTH, and YACQ…VKAH. Disordered regions lie at residues 485-512 and 529-665; these read DPSS…SSTE and PATS…QPNG. Positions 491-507 match the Bipartite nuclear localization signal motif; the sequence is KHVKAHSSKEQQARKKL. Over residues 497–512 the composition is skewed to basic and acidic residues; it reads SSKEQQARKKLRSSTE. Composition is skewed to polar residues over residues 557–567, 588–600, and 632–663; these read IFSSNYSSRSG, VQGS…SQLP, and SILQ…SFQP.

It belongs to the GLI C2H2-type zinc-finger protein family. In terms of tissue distribution, in the adult, expressed at high levels in the kidney and at lower levels in the brain, skeletal muscle, pancreas, liver, lung, thymus and ovary.

The protein resides in the nucleus. Its function is as follows. Acts both as a repressor and an activator of transcription. Binds to the consensus sequence 5'-GACCACCCAC-3'. This Homo sapiens (Human) protein is Zinc finger protein GLIS3 (GLIS3).